The sequence spans 67 residues: ATP synthase F(0) complex subunit 8 (67 aa).

A helical membrane pass occupies residues 8–24 (TWFITIISSMATLFILF). Residue Lys54 is modified to N6-acetyllysine; alternate. Residue Lys54 is modified to N6-succinyllysine; alternate. Lys57 bears the N6-acetyllysine mark.

This sequence belongs to the ATPase protein 8 family. As to quaternary structure, component of the ATP synthase complex composed at least of ATP5F1A/subunit alpha, ATP5F1B/subunit beta, ATP5MC1/subunit c (homooctomer), MT-ATP6/subunit a, MT-ATP8/subunit 8, ATP5ME/subunit e, ATP5MF/subunit f, ATP5MG/subunit g, ATP5MK/subunit k, ATP5MJ/subunit j, ATP5F1C/subunit gamma, ATP5F1D/subunit delta, ATP5F1E/subunit epsilon, ATP5PF/subunit F6, ATP5PB/subunit b, ATP5PD/subunit d, ATP5PO/subunit OSCP. ATP synthase complex consists of a soluble F(1) head domain (subunits alpha(3) and beta(3)) - the catalytic core - and a membrane F(0) domain - the membrane proton channel (subunits c, a, 8, e, f, g, k and j). These two domains are linked by a central stalk (subunits gamma, delta, and epsilon) rotating inside the F1 region and a stationary peripheral stalk (subunits F6, b, d, and OSCP). Interacts with PRICKLE3.

It localises to the mitochondrion membrane. Its function is as follows. Subunit 8, of the mitochondrial membrane ATP synthase complex (F(1)F(0) ATP synthase or Complex V) that produces ATP from ADP in the presence of a proton gradient across the membrane which is generated by electron transport complexes of the respiratory chain. ATP synthase complex consist of a soluble F(1) head domain - the catalytic core - and a membrane F(1) domain - the membrane proton channel. These two domains are linked by a central stalk rotating inside the F(1) region and a stationary peripheral stalk. During catalysis, ATP synthesis in the catalytic domain of F(1) is coupled via a rotary mechanism of the central stalk subunits to proton translocation. In vivo, can only synthesize ATP although its ATP hydrolase activity can be activated artificially in vitro. Part of the complex F(0) domain. The polypeptide is ATP synthase F(0) complex subunit 8 (Rattus norvegicus (Rat)).